A 328-amino-acid chain; its full sequence is Protease HtpX homolog (328 aa).

The next 2 membrane-spanning stretches (helical) occupy residues Thr-6 to Gly-26 and Ser-28 to Ser-48. His-130 contributes to the Zn(2+) binding site. Residue Glu-131 is part of the active site. A Zn(2+)-binding site is contributed by His-134. 2 helical membrane-spanning segments follow: residues Ile-145–Gly-165 and Pro-172–Val-192. Residue Glu-201 participates in Zn(2+) binding. The interval Gln-279–Ser-328 is disordered. Over residues Ser-287–Pro-299 the composition is skewed to low complexity.

It belongs to the peptidase M48B family. The cofactor is Zn(2+).

It is found in the cell inner membrane. This is Protease HtpX homolog from Rhizobium rhizogenes (strain K84 / ATCC BAA-868) (Agrobacterium radiobacter).